The sequence spans 293 residues: Light-independent protochlorophyllide reductase iron-sulfur ATP-binding protein (293 aa).

Residues 10 to 15 (GIGKST) and Lys-39 contribute to the ATP site. Ser-14 is a binding site for Mg(2+). [4Fe-4S] cluster is bound by residues Cys-95 and Cys-129. 180–181 (NR) is a binding site for ATP.

The protein belongs to the NifH/BchL/ChlL family. Homodimer. Protochlorophyllide reductase is composed of three subunits; ChlL, ChlN and ChlB. It depends on [4Fe-4S] cluster as a cofactor.

It is found in the plastid. Its subcellular location is the chloroplast. It carries out the reaction chlorophyllide a + oxidized 2[4Fe-4S]-[ferredoxin] + 2 ADP + 2 phosphate = protochlorophyllide a + reduced 2[4Fe-4S]-[ferredoxin] + 2 ATP + 2 H2O. It participates in porphyrin-containing compound metabolism; chlorophyll biosynthesis (light-independent). In terms of biological role, component of the dark-operative protochlorophyllide reductase (DPOR) that uses Mg-ATP and reduced ferredoxin to reduce ring D of protochlorophyllide (Pchlide) to form chlorophyllide a (Chlide). This reaction is light-independent. The L component serves as a unique electron donor to the NB-component of the complex, and binds Mg-ATP. In Adiantum capillus-veneris (Maidenhair fern), this protein is Light-independent protochlorophyllide reductase iron-sulfur ATP-binding protein.